Consider the following 437-residue polypeptide: MSDKVIIIGGGLAGSEAAWQAARRGMKVELWEMRPGKLTPAHSTGYLAELVCSNSLRADSLENAAGLLKAEMRQAGSLIMEVAAACRVPAGKALAVDREEFASRVTAILEAHPGITVIREEVQAIPDNGPVIIATGPLTSPAMVRALKEFTGAEYLYFYDAAAPIVTAESLDYSRIFKGSRYGRGEDDYLNCPLNKEEYEAFYQALVTAERHPRHEFEPEVVFEGCMPVEVMAARGPDTLRFGPMRPVGLIDPATGREPYAVVQLRQDNAAGTLYNLVGFQTSLKWGEQERVFRLIPGLREAEFVRFGVMHRNTYVNSPRLLQPTLQVKGYPWLFLAGQLTGVEGYIESAACGLVAGVNATRFARGEEPLIPPPATAHGALLHYITDPTHTPFQPMHINYGLLPPLEHRVKNRVERNRILAARALEIWNSSGEFSGN.

An FAD-binding site is contributed by 9–14 (GGGLAG).

Belongs to the MnmG family. TrmFO subfamily. Requires FAD as cofactor.

The protein localises to the cytoplasm. It catalyses the reaction uridine(54) in tRNA + (6R)-5,10-methylene-5,6,7,8-tetrahydrofolate + NADH + H(+) = 5-methyluridine(54) in tRNA + (6S)-5,6,7,8-tetrahydrofolate + NAD(+). The enzyme catalyses uridine(54) in tRNA + (6R)-5,10-methylene-5,6,7,8-tetrahydrofolate + NADPH + H(+) = 5-methyluridine(54) in tRNA + (6S)-5,6,7,8-tetrahydrofolate + NADP(+). Its function is as follows. Catalyzes the folate-dependent formation of 5-methyl-uridine at position 54 (M-5-U54) in all tRNAs. The sequence is that of Methylenetetrahydrofolate--tRNA-(uracil-5-)-methyltransferase TrmFO from Moorella thermoacetica (strain ATCC 39073 / JCM 9320).